A 559-amino-acid chain; its full sequence is Formate--tetrahydrofolate ligase (559 aa).

Threonine 67–serine 74 serves as a coordination point for ATP.

Belongs to the formate--tetrahydrofolate ligase family.

The catalysed reaction is (6S)-5,6,7,8-tetrahydrofolate + formate + ATP = (6R)-10-formyltetrahydrofolate + ADP + phosphate. The protein operates within one-carbon metabolism; tetrahydrofolate interconversion. This Lactobacillus delbrueckii subsp. bulgaricus (strain ATCC 11842 / DSM 20081 / BCRC 10696 / JCM 1002 / NBRC 13953 / NCIMB 11778 / NCTC 12712 / WDCM 00102 / Lb 14) protein is Formate--tetrahydrofolate ligase.